Consider the following 452-residue polypeptide: Bifunctional protein GlmU (452 aa).

A pyrophosphorylase region spans residues 1-224; the sequence is MNIVILAAGM…EWETHGVNSK (224 aa). UDP-N-acetyl-alpha-D-glucosamine is bound by residues 6 to 9, K20, Q71, 76 to 77, 98 to 100, G135, E149, N164, and N222; these read LAAG, GT, and YGD. Residue D100 participates in Mg(2+) binding. Residue N222 participates in Mg(2+) binding. A linker region spans residues 225–245; the sequence is VQLAELERIHQRNIAHALLEQ. Residues 246–452 form an N-acetyltransferase region; it reads GVTLADPARI…NWQRPVKIKK (207 aa). Residues R328 and K346 each contribute to the UDP-N-acetyl-alpha-D-glucosamine site. The active-site Proton acceptor is H358. Y361 and N372 together coordinate UDP-N-acetyl-alpha-D-glucosamine. Residues A375, 381–382, S400, A418, and R435 contribute to the acetyl-CoA site; that span reads NY.

The protein in the N-terminal section; belongs to the N-acetylglucosamine-1-phosphate uridyltransferase family. This sequence in the C-terminal section; belongs to the transferase hexapeptide repeat family. In terms of assembly, homotrimer. Requires Mg(2+) as cofactor.

The protein localises to the cytoplasm. It catalyses the reaction alpha-D-glucosamine 1-phosphate + acetyl-CoA = N-acetyl-alpha-D-glucosamine 1-phosphate + CoA + H(+). The catalysed reaction is N-acetyl-alpha-D-glucosamine 1-phosphate + UTP + H(+) = UDP-N-acetyl-alpha-D-glucosamine + diphosphate. It participates in nucleotide-sugar biosynthesis; UDP-N-acetyl-alpha-D-glucosamine biosynthesis; N-acetyl-alpha-D-glucosamine 1-phosphate from alpha-D-glucosamine 6-phosphate (route II): step 2/2. Its pathway is nucleotide-sugar biosynthesis; UDP-N-acetyl-alpha-D-glucosamine biosynthesis; UDP-N-acetyl-alpha-D-glucosamine from N-acetyl-alpha-D-glucosamine 1-phosphate: step 1/1. It functions in the pathway bacterial outer membrane biogenesis; LPS lipid A biosynthesis. In terms of biological role, catalyzes the last two sequential reactions in the de novo biosynthetic pathway for UDP-N-acetylglucosamine (UDP-GlcNAc). The C-terminal domain catalyzes the transfer of acetyl group from acetyl coenzyme A to glucosamine-1-phosphate (GlcN-1-P) to produce N-acetylglucosamine-1-phosphate (GlcNAc-1-P), which is converted into UDP-GlcNAc by the transfer of uridine 5-monophosphate (from uridine 5-triphosphate), a reaction catalyzed by the N-terminal domain. The chain is Bifunctional protein GlmU from Janthinobacterium sp. (strain Marseille) (Minibacterium massiliensis).